A 467-amino-acid polypeptide reads, in one-letter code: MAP kinase-interacting serine/threonine-protein kinase 2 (467 aa).

A Protein kinase domain is found at 83–367; it reads QLQQEILGEG…AAQVLQHPWV (285 aa). ATP contacts are provided by residues 89–97 and Lys112; that span reads LGEGAYAKV. The active-site Proton acceptor is the Asp204. Residues Cys298, Cys310, and Cys313 each coordinate Zn(2+). The disordered stretch occupies residues 432–467; the sequence is MQLSPPSESKLAKRRQQGSKGGISPPSLAPLLIVSD.

This sequence belongs to the protein kinase superfamily. CAMK Ser/Thr protein kinase family. Mg(2+) serves as cofactor. The cofactor is Zn(2+).

The catalysed reaction is L-seryl-[protein] + ATP = O-phospho-L-seryl-[protein] + ADP + H(+). The enzyme catalyses L-threonyl-[protein] + ATP = O-phospho-L-threonyl-[protein] + ADP + H(+). May play a role in the response to environmental stress and cytokines. Appears to regulate translation by phosphorylating EIF4E, thus increasing the affinity of this protein for the 7-methylguanosine-containing mRNA cap. The polypeptide is MAP kinase-interacting serine/threonine-protein kinase 2 (mknk2) (Xenopus laevis (African clawed frog)).